Reading from the N-terminus, the 687-residue chain is Hemin receptor (687 aa).

The first 28 residues, 1-28 (MPRSTSDRFRWSPLSLAIACTLSLAVQA), serve as a signal peptide directing secretion. The TonB box motif lies at 44-51 (DTMVVTAT). One can recognise a TBDR plug domain in the interval 56-167 (SSFEAPMMVT…LGGVISYETV (112 aa)). Residues 178–687 (NSGYRVYSAA…NAKFFVSYQW (510 aa)) enclose the TBDR beta-barrel domain. Residues 319 to 338 (ARPQGTPEEGRKQTTKGGKL) form a disordered region. Basic and acidic residues predominate over residues 326-338 (EEGRKQTTKGGKL). Residues 670–687 (QGVPQDGRNAKFFVSYQW) carry the TonB C-terminal box motif.

It belongs to the TonB-dependent receptor family.

The protein localises to the cell outer membrane. Its function is as follows. This protein is involved in the initial step of iron uptake by binding hemin, an iron chelatin siderophore that allows the bacteria to extract iron from the environment. This is Hemin receptor (hemR) from Yersinia enterocolitica.